We begin with the raw amino-acid sequence, 199 residues long: MPIGYPLVKAMDKDRFISYFLINNALLNERVIFLCNYEDATDESIYIGMLLYLESENSQKPVSFYINSSITFPNLCFGLYDTILQIKADIVTICLGLAGGMSSLILAAGTKGQRFALPNSRIMMQEPLIDGGVNGQATDLAIEAKELMDTKEILINLYHERTGQPKPVIEKDLQRPRYFSAQAAKEYGFIDSLLMASNG.

Belongs to the peptidase S14 family. As to quaternary structure, component of the chloroplastic Clp protease core complex.

The protein resides in the plastid. Its subcellular location is the cyanelle. In terms of biological role, has lost the two conserved residues (Ser and His) proposed to be part of the active site. Therefore it could be inactive. The protein is Putative ATP-dependent Clp protease proteolytic subunit-like (clpP-B) of Cyanophora paradoxa.